We begin with the raw amino-acid sequence, 1925 residues long: MAPRAAGGAPLSARAAAASPPPFQTPPRCPVPLLLLLLLGAARAGALEIQRRFPSPTPTNNFALDGAAGTVYLAAVNRLYQLSGANLSLEAEAAVGPVPDSPLCHAPQLPQASCEHPRRLTDNYNKILQLDPGQGLVVVCGSIYQGFCQLRRRGNISAVAVRFPPAAPPAEPVTVFPSMLNVAANHPNASTVGLVLPPAAGAGGSRLLVGATYTGYGSSFFPRNRSLEDHRFENTPEIAIRSLDTRGDLAKLFTFDLNPSDDNILKIKQGAKEQHKLGFVSAFLHPSDPPPGAQSYAYLALNSEARAGDKESQARSLLARICLPHGAGGDAKKLTESYIQLGLQCAGGAGRGDLYSRLVSVFPARERLFAVFERPQGSPAARAAPAALCAFRFADVRAAIRAARTACFVEPAPDVVAVLDSVVQGTGPACERKLNIQLQPEQLDCGAAHLQHPLSILQPLKATPVFRAPGLTSVAVASVNNYTAVFLGTVNGRLLKINLNESMQVVSRRVVTVAYGEPVHHVMQFDPADSGYLYLMTSHQMARVKVAACNVHSTCGDCVGAADAYCGWCALETRCTLQQDCTNSSQQHFWTSASEGPSRCPAMTVLPSEIDVRQEYPGMILQISGSLPSLSGMEMACDYGNNIRTVARVPGPAFGHQIAYCNLLPRDQFPPFPPNQDHVTVEMSVRVNGRNIVKANFTIYDCSRTAQVYPHTACTSCLSAQWPCFWCSQQHSCVSNQSRCEASPNPTSPQDCPRTLLSPLAPVPTGGSQNILVPLANTAFFQGAALECSFGLEEIFEAVWVNESVVRCDQVVLHTTRKSQVFPLSLQLKGRPARFLDSPEPMTVMVYNCAMGSPDCSQCLGREDLGHLCMWSDGCRLRGPLQPMAGTCPAPEIHAIEPLSGPLDGGTLLTIRGRNLGRRLSDVAHGVWIGGVACEPLPDRYTVSEEIVCVTGPAPGPLSGVVTVNASKEGKSRDRFSYVLPLVHSLEPTMGPKAGGTRITIHGNDLHVGSELQVLVNDTDPCTELMRTDTSIACTMPEGALPAPVPVCVRFERRGCVHGNLTFWYMQNPVITAISPRRSPVSGGRTITVAGERFHMVQNVSMAVHHIGREPTLCKVLNSTLITCPSPGALSNASAPVDFFINGRAYADEVAVAEELLDPEEAQRGSRFRLDYLPNPQFSTAKREKWIKHHPGEPLTLVIHKEQDSLGLQSHEYRVKIGQVSCDIQIVSDRIIHCSVNESLGAAVGQLPITIQVGNFNQTIATLQLGGSETAIIVSIVICSVLLLLSVVALFVFCTKSRRAERYWQKTLLQMEEMESQIREEIRKGFAELQTDMTDLTKELNRSQGIPFLEYKHFVTRTFFPKCSSLYEERYVLPSQTLNSQGSSQAQETHPLLGEWKIPESCRPNMEEGISLFSSLLNNKHFLIVFVHALEQQKDFAVRDRCSLASLLTIALHGKLEYYTSIMKELLVDLIDASAAKNPKLMLRRTESVVEKMLTNWMSICMYSCLRETVGEPFFLLLCAIKQQINKGSIDAITGKARYTLSEEWLLRENIEAKPRNLNVSFQGCGMDSLSVRAMDTDTLTQVKEKILEAFCKNVPYSQWPRAEDVDLEWFASSTQSYILRDLDDTSVVEDGRKKLNTLAHYKIPEGASLAMSLIDKKDNTLGRVKDLDTEKYFHLVLPTDELAEPKKSHRQSHRKKVLPEIYLTRLLSTKGTLQKFLDDLFKAILSIREDKPPLAVKYFFDFLEEQAEKRGISDPDTLHIWKTNSLPLRFWVNILKNPQFVFDIDKTDHIDACLSVIAQAFIDACSISDLQLGKDSPTNKLLYAKEIPEYRKIVQRYYKQIQDMTPLSEQEMNAHLAEESRKYQNEFNTNVAMAEIYKYAKRYRPQIMAALEANPTARRTQLQHKFEQVVALMEDNIYECYSEA.

Over residues Met-1–Ala-18 the composition is skewed to low complexity. Residues Met-1–Phe-23 form a disordered region. The first 46 residues, Met-1–Ala-46, serve as a signal peptide directing secretion. The 500-residue stretch at Leu-47 to Val-546 folds into the Sema domain. Residues Leu-47–Ala-1271 lie on the Extracellular side of the membrane. N-linked (GlcNAc...) asparagine glycosylation occurs at Asn-86. 2 disulfide bridges follow: Cys-104-Cys-114 and Cys-140-Cys-148. 3 N-linked (GlcNAc...) asparagine glycosylation sites follow: Asn-155, Asn-188, and Asn-224. Disulfide bonds link Cys-322-Cys-445 and Cys-345-Cys-389. N-linked (GlcNAc...) asparagine glycosylation is found at Asn-481 and Asn-500. Intrachain disulfides connect Cys-549/Cys-566, Cys-555/Cys-600, Cys-558/Cys-575, Cys-569/Cys-581, and Cys-637/Cys-661. Asn-583 is a glycosylation site (N-linked (GlcNAc...) asparagine). Residues Asn-696, Asn-736, Asn-802, Asn-965, Asn-1017, Asn-1060, Asn-1099, Asn-1118, Asn-1132, Asn-1237, and Asn-1257 are each glycosylated (N-linked (GlcNAc...) asparagine). IPT/TIG domains lie at Pro-891–Val-979, Pro-981–Met-1066, and Pro-1069–Glu-1160. Residues Ile-1272–Val-1292 form a helical membrane-spanning segment. The Cytoplasmic segment spans residues Phe-1293 to Ala-1925.

The protein belongs to the plexin family. In terms of assembly, interacts with NRP1 and SEMA4A. Interacts with SH3BP1; they dissociate upon SEMA3E binding to PLXND1 allowing SH3BP1 to transduce downstream signal through RAC1 inactivation. As to expression, detected at low levels in heart, placenta, lung, skeletal muscle, kidney, thymus and liver. Detected at very low levels in brain, colon, spleen, small intestine and peripheral blood leukocytes.

It localises to the cell membrane. Its subcellular location is the cell projection. It is found in the lamellipodium membrane. Cell surface receptor for SEMA4A and for class 3 semaphorins, such as SEMA3A, SEMA3C and SEMA3E. Plays an important role in cell-cell signaling, and in regulating the migration of a wide spectrum of cell types. Regulates the migration of thymocytes in the medulla. Regulates endothelial cell migration. Plays an important role in ensuring the specificity of synapse formation. Required for normal development of the heart and vasculature. Mediates anti-angiogenic signaling in response to SEMA3E. This is Plexin-D1 (PLXND1) from Homo sapiens (Human).